The chain runs to 42 residues: Large ribosomal subunit protein bL36 (42 aa).

The protein belongs to the bacterial ribosomal protein bL36 family.

The sequence is that of Large ribosomal subunit protein bL36 from Ehrlichia chaffeensis (strain ATCC CRL-10679 / Arkansas).